Consider the following 534-residue polypeptide: T-complex protein 1 subunit gamma (534 aa).

Position 1 is an N-acetylmethionine (M1). Position 257 is a phosphoserine (S257). C371 and C377 form a disulfide bridge.

The protein belongs to the TCP-1 chaperonin family. Heterooligomeric complex of about 850 to 900 kDa that forms two stacked rings, 12 to 16 nm in diameter.

Its subcellular location is the cytoplasm. In terms of biological role, molecular chaperone; assists the folding of proteins upon ATP hydrolysis. Known to play a role, in vitro, in the folding of actin and tubulin. In yeast may play a role in mitotic spindle formation. The chain is T-complex protein 1 subunit gamma (CCT3) from Saccharomyces cerevisiae (strain ATCC 204508 / S288c) (Baker's yeast).